The sequence spans 382 residues: Gas vesicle protein C1 (382 aa).

Basic and acidic residues predominate over residues 1–18 (MSVTDKRDEMSTARDKFA). The segment at 1–21 (MSVTDKRDEMSTARDKFAESQ) is disordered. Repeat copies occupy residues 22 to 60 (QEFESYADEFAADITAKQDDVSDLVDAITDFQAEMTNTT), 61 to 92 (DAFHTYGDEFAAEVDHLRADIDAQRDVIREMQ), 93 to 130 (DAFEAYADIFATDIADKQDIGNLLAAIEALRTEMNSTH), 131 to 168 (GAFEAYADDFAADVAALRDISDLVAAIDDFQEEFIAVQ), 169 to 200 (DAFDNYAGDFDAEIDQLHAAIADQHDSFDATA), 201 to 240 (DAFAEYRDEFYRIEVEALLEAINDFQQDIGDFRAEFETTE), and 241 to 284 (DAFV…VSPD). Positions 22–284 (QEFESYADEF…VEAEAEVSPD (263 aa)) are 7 X approximate tandem repeats. Residues 260–302 (GAAEAEAEPVEADADVEAEAEVSPDEAGGESAGTEEEETEPAE) show a composition bias toward acidic residues. The segment at 260-382 (GAAEAEAEPV…DVPLRPDDKT (123 aa)) is disordered. The segment covering 303–316 (VETAAPEVEGSPAD) has biased composition (low complexity). Positions 317 to 336 (TADEAEDTEAEEETEEEAPE) are enriched in acidic residues. Residues 365–382 (EYRDEYGEDVPLRPDDKT) show a composition bias toward basic and acidic residues.

The protein belongs to the halobacterial gas vesicle GvpC family. As to quaternary structure, forms homodimers, interacts with GvpF1, GvpH1, GvpI1, GvpL1, GvpN1 and GvpO1 via its C-terminus (residues 329-382).

The protein resides in the gas vesicle. The protein localises to the cytoplasm. Confers stability, involved in shaping gas vesicles. Gas vesicles are hollow, gas filled proteinaceous nanostructures found in several microbial planktonic microorganisms. They allow positioning of halobacteria at the optimal depth for growth in the poorly aerated, shallow brine pools of their habitat. In terms of biological role, expression of a 9.5 kb p-vac DNA fragment containing 2 divergently transcribed regions (gvpD-gvpE-gvpF-gvpG-gvpH-gvpI-gvpJ-gvpK-gvpL-gvpM and gvpA-gvpC-gvpN-gvpO) allows H.volcanii to produce gas vesicles. A similar region restores gas vesicle production in H.halobium without the p-vac locus, but it still has the c-vac locus. The chain is Gas vesicle protein C1 (gvpC1) from Halobacterium salinarum (strain ATCC 700922 / JCM 11081 / NRC-1) (Halobacterium halobium).